The following is a 365-amino-acid chain: UDP-N-acetylglucosamine--N-acetylmuramyl-(pentapeptide) pyrophosphoryl-undecaprenol N-acetylglucosamine transferase (365 aa).

UDP-N-acetyl-alpha-D-glucosamine-binding positions include 20–22, N132, R168, S196, I253, and Q298; that span reads TGG.

It belongs to the glycosyltransferase 28 family. MurG subfamily.

The protein resides in the cell inner membrane. It catalyses the reaction di-trans,octa-cis-undecaprenyl diphospho-N-acetyl-alpha-D-muramoyl-L-alanyl-D-glutamyl-meso-2,6-diaminopimeloyl-D-alanyl-D-alanine + UDP-N-acetyl-alpha-D-glucosamine = di-trans,octa-cis-undecaprenyl diphospho-[N-acetyl-alpha-D-glucosaminyl-(1-&gt;4)]-N-acetyl-alpha-D-muramoyl-L-alanyl-D-glutamyl-meso-2,6-diaminopimeloyl-D-alanyl-D-alanine + UDP + H(+). Its pathway is cell wall biogenesis; peptidoglycan biosynthesis. Cell wall formation. Catalyzes the transfer of a GlcNAc subunit on undecaprenyl-pyrophosphoryl-MurNAc-pentapeptide (lipid intermediate I) to form undecaprenyl-pyrophosphoryl-MurNAc-(pentapeptide)GlcNAc (lipid intermediate II). This Ralstonia nicotianae (strain ATCC BAA-1114 / GMI1000) (Ralstonia solanacearum) protein is UDP-N-acetylglucosamine--N-acetylmuramyl-(pentapeptide) pyrophosphoryl-undecaprenol N-acetylglucosamine transferase.